Reading from the N-terminus, the 63-residue chain is ComG operon repressor (63 aa).

Functionally, negatively regulates the transcription of the comG operon. The sequence is that of ComG operon repressor (comZ) from Bacillus subtilis (strain 168).